Reading from the N-terminus, the 557-residue chain is Inositol-3-phosphate synthase 1 (557 aa).

NAD(+) is bound by residues G67, G68, N69, N70, D141, S177, V178, Q188, R191, T228, A229, N230, T231, G278, S279, D303, S306, N337, N338, D339, and K352. Position 279 is a phosphoserine (S279). S357 bears the Phosphoserine mark. 4 residues coordinate NAD(+): G390, D391, D419, and S420. The segment at 514–557 (GIKPEEVKATSPLPCKKESTPATNGCTGDANGHTQAPTPELSTA) is disordered. S524 is modified (phosphoserine). Residues 533–557 (TPATNGCTGDANGHTQAPTPELSTA) show a composition bias toward polar residues.

Belongs to the myo-inositol 1-phosphate synthase family. In terms of assembly, homotrimer. It depends on NAD(+) as a cofactor. In terms of processing, phosphorylation at Ser-524 does not appear to affect enzyme activity, and is detected in brain and testis. Expressed in testis, brain and epididymis (at protein level). Moderately expressed in brain, lung, liver, and kidney. Low expression in heart and spleen. Very low expression in skeletal muscle. As to expression, expressed in testis, spleen, heart, brainstem, hippocampus, cerebellum, cortex and amygdala. Absent or very lowly expressed in intestine, lung and muscle. In terms of tissue distribution, expressed in intestine, lung, liver, muscle, testis, spleen, brainstem, hippocampus, cerebellum, cortex and amygdala. Absent or lowly expressed in heart and kidney. Expressed in intestine (at protein level).

The protein resides in the cytoplasm. It catalyses the reaction D-glucose 6-phosphate = 1D-myo-inositol 3-phosphate. It functions in the pathway polyol metabolism; myo-inositol biosynthesis; myo-inositol from D-glucose 6-phosphate: step 1/2. With respect to regulation, inhibited by 2-deoxyglucitol 6-phosphate (dgtolP) and 2-deoxy-D-glucose 6-phosphate. Inhibited by copper, mercury, cadmium, zinc and copper ions. Activated by potassium and ammonium ions. In terms of biological role, key enzyme in myo-inositol biosynthesis pathway that catalyzes the conversion of glucose 6-phosphate to 1-myo-inositol 1-phosphate in a NAD-dependent manner. Rate-limiting enzyme in the synthesis of all inositol-containing compounds. Its function is as follows. Key enzyme in myo-inositol biosynthesis pathway that catalyzes the conversion of glucose 6-phosphate to 1-myo-inositol 1-phosphate in a NAD-dependent manner. Functionally, competitively inhibits the function of isoform 1, presumably by competing for NAD cofactor. This Rattus norvegicus (Rat) protein is Inositol-3-phosphate synthase 1 (Isyna1).